Here is a 642-residue protein sequence, read N- to C-terminus: Threonine--tRNA ligase (642 aa).

In terms of domain architecture, TGS spans 1–61; it reads MPVITLPDGS…DTDSELSIIT (61 aa). The segment at 243 to 534 is catalytic; it reads DHRKIGKQLD…LIEEYAGKFP (292 aa). Zn(2+) contacts are provided by C334, H385, and H511.

This sequence belongs to the class-II aminoacyl-tRNA synthetase family. As to quaternary structure, homodimer. It depends on Zn(2+) as a cofactor.

Its subcellular location is the cytoplasm. The enzyme catalyses tRNA(Thr) + L-threonine + ATP = L-threonyl-tRNA(Thr) + AMP + diphosphate + H(+). In terms of biological role, catalyzes the attachment of threonine to tRNA(Thr) in a two-step reaction: L-threonine is first activated by ATP to form Thr-AMP and then transferred to the acceptor end of tRNA(Thr). Also edits incorrectly charged L-seryl-tRNA(Thr). The sequence is that of Threonine--tRNA ligase from Shewanella woodyi (strain ATCC 51908 / MS32).